We begin with the raw amino-acid sequence, 57 residues long: Phospholipase A2 superbin b (57 aa).

The Ca(2+) site is built by Tyr-28, Gly-30, and Gly-32. Cysteines 29 and 45 form a disulfide. Residue His-48 is part of the active site. Position 49 (Asp-49) interacts with Ca(2+).

It depends on Ca(2+) as a cofactor. In terms of tissue distribution, expressed by the venom gland.

The protein localises to the secreted. The catalysed reaction is a 1,2-diacyl-sn-glycero-3-phosphocholine + H2O = a 1-acyl-sn-glycero-3-phosphocholine + a fatty acid + H(+). Its function is as follows. Snake venom phospholipase A2 (PLA2) that inhibits collagen-induced platelet aggregation. In terms of inhibition of platelet aggregation, superbin b is more potent as superbin c, and d. PLA2 catalyzes the calcium-dependent hydrolysis of the 2-acyl groups in 3-sn-phosphoglycerides. This is Phospholipase A2 superbin b from Austrelaps superbus (Lowland copperhead snake).